The following is a 313-amino-acid chain: Expansin-like A4 (313 aa).

Positions methionine 1–alanine 30 are cleaved as a signal peptide. In terms of domain architecture, Expansin-like EG45 spans glycine 59–serine 173. N-linked (GlcNAc...) asparagine glycosylation occurs at asparagine 124. Positions threonine 188 to threonine 281 constitute an Expansin-like CBD domain.

It belongs to the expansin family. Expansin-like A subfamily.

It localises to the secreted. In Oryza sativa subsp. japonica (Rice), this protein is Expansin-like A4 (EXLA4).